The sequence spans 227 residues: Sensory transduction protein RegX3 (227 aa).

The Response regulatory domain occupies 3-116 (SVLIVEDEES…ELIARIRAVL (114 aa)). D52 bears the 4-aspartylphosphate mark. Positions 128–227 (DGVLESGPVR…VRGLGYKLEG (100 aa)) form a DNA-binding region, ompR/PhoB-type.

In terms of processing, phosphorylated by SenX3.

Functionally, member of the two-component regulatory system SenX3/RegX3. Specifically binds to the promoter region of the senX3-regX3 operon. This is Sensory transduction protein RegX3 from Mycobacterium bovis (strain ATCC BAA-935 / AF2122/97).